The chain runs to 441 residues: Probable glycine dehydrogenase (decarboxylating) subunit 1 (441 aa).

This sequence belongs to the GcvP family. N-terminal subunit subfamily. The glycine cleavage system is composed of four proteins: P, T, L and H. In this organism, the P 'protein' is a heterodimer of two subunits.

It carries out the reaction N(6)-[(R)-lipoyl]-L-lysyl-[glycine-cleavage complex H protein] + glycine + H(+) = N(6)-[(R)-S(8)-aminomethyldihydrolipoyl]-L-lysyl-[glycine-cleavage complex H protein] + CO2. Its function is as follows. The glycine cleavage system catalyzes the degradation of glycine. The P protein binds the alpha-amino group of glycine through its pyridoxal phosphate cofactor; CO(2) is released and the remaining methylamine moiety is then transferred to the lipoamide cofactor of the H protein. The protein is Probable glycine dehydrogenase (decarboxylating) subunit 1 of Halobacterium salinarum (strain ATCC 700922 / JCM 11081 / NRC-1) (Halobacterium halobium).